Reading from the N-terminus, the 447-residue chain is Phosphoglucosamine mutase (447 aa).

Serine 108 functions as the Phosphoserine intermediate in the catalytic mechanism. Positions 108, 247, 249, and 251 each coordinate Mg(2+). A Phosphoserine modification is found at serine 108.

This sequence belongs to the phosphohexose mutase family. Mg(2+) is required as a cofactor. Activated by phosphorylation.

The enzyme catalyses alpha-D-glucosamine 1-phosphate = D-glucosamine 6-phosphate. Catalyzes the conversion of glucosamine-6-phosphate to glucosamine-1-phosphate. This Bordetella petrii (strain ATCC BAA-461 / DSM 12804 / CCUG 43448) protein is Phosphoglucosamine mutase.